A 222-amino-acid chain; its full sequence is MEPHDQSGSTTRQLDEIRDRRGSQIRSVRLLPWRPFTRFPVCPSGTSPYSRGTHSQPSYVRCQNCERARQWFRAHDGPRCLHQRPDYSRLQAPPDPFQHLNSFEPILLAALSVLRPLPRDIQITIISCACDYFHSVRCASSRYLGSSRSAVKRRAARLNYCYKCGHPLYLNKPHTCRPGRLCSASISERLALLREGPIRSLTENPINARAAHFLAHELLDPR.

Over residues 1–12 (MEPHDQSGSTTR) the composition is skewed to polar residues. The tract at residues 1-21 (MEPHDQSGSTTRQLDEIRDRR) is disordered.

In terms of biological role, may act as a regulatory factor during viral transcription. This is 23kDa protein from Indian citrus ringspot virus (isolate Kinnow mandarin/India/K1/1996) (ICRSV).